We begin with the raw amino-acid sequence, 284 residues long: Shikimate dehydrogenase (NADP(+)) (284 aa).

Shikimate is bound by residues 20-22 and S67; that span reads SIS. The active-site Proton acceptor is the K71. NADP(+) is bound at residue D83. The shikimate site is built by N92 and D107. NADP(+) is bound by residues 129–133 and I227; that span reads GAGGA. Shikimate is bound at residue Y229. Residue G250 coordinates NADP(+).

This sequence belongs to the shikimate dehydrogenase family. As to quaternary structure, homodimer.

It catalyses the reaction shikimate + NADP(+) = 3-dehydroshikimate + NADPH + H(+). The protein operates within metabolic intermediate biosynthesis; chorismate biosynthesis; chorismate from D-erythrose 4-phosphate and phosphoenolpyruvate: step 4/7. Involved in the biosynthesis of the chorismate, which leads to the biosynthesis of aromatic amino acids. Catalyzes the reversible NADPH linked reduction of 3-dehydroshikimate (DHSA) to yield shikimate (SA). The sequence is that of Shikimate dehydrogenase (NADP(+)) from Streptococcus pneumoniae (strain ATCC 700669 / Spain 23F-1).